We begin with the raw amino-acid sequence, 283 residues long: Pantothenate synthetase (283 aa).

30 to 37 (MGNLHDGH) contributes to the ATP binding site. H37 (proton donor) is an active-site residue. Q61 provides a ligand contact to (R)-pantoate. Q61 is a binding site for beta-alanine. An ATP-binding site is contributed by 149–152 (GEKD). Q155 contributes to the (R)-pantoate binding site. Residues M178 and 186-189 (LSSR) each bind ATP.

Belongs to the pantothenate synthetase family. In terms of assembly, homodimer.

It localises to the cytoplasm. The enzyme catalyses (R)-pantoate + beta-alanine + ATP = (R)-pantothenate + AMP + diphosphate + H(+). Its pathway is cofactor biosynthesis; (R)-pantothenate biosynthesis; (R)-pantothenate from (R)-pantoate and beta-alanine: step 1/1. Its activity is regulated as follows. Activation requires a combination of a divalent cation, magnesium or manganese, and a monovalent cation, potassium or ammonium. Above the optimum concentration for activation, magnesium and manganese are rather inhibitory. Also activated by 2-mercaptoethanol, dithiothreitol, cysteine and glutathione. Inhibited by divalent cations (mercury, cobalt, zinc, copper, silver), chelating agents (EDTA, EGTA and o-phenanthroline), and analogs of beta-alanine (taurine, gamma-aminobutyrate, gamma-amino-beta-hydroxybutyrate). Catalyzes the condensation of pantoate with beta-alanine in an ATP-dependent reaction via a pantoyl-adenylate intermediate. The polypeptide is Pantothenate synthetase (panC) (Escherichia coli (strain K12)).